The primary structure comprises 120 residues: Large ribosomal subunit protein uL18 (120 aa).

The tract at residues 1 to 22 (MKTTRKESLKRRHRRIRRKVSG) is disordered. Over residues 8–20 (SLKRRHRRIRRKV) the composition is skewed to basic residues.

It belongs to the universal ribosomal protein uL18 family. Part of the 50S ribosomal subunit; part of the 5S rRNA/L5/L18/L25 subcomplex. Contacts the 5S and 23S rRNAs.

Functionally, this is one of the proteins that bind and probably mediate the attachment of the 5S RNA into the large ribosomal subunit, where it forms part of the central protuberance. The chain is Large ribosomal subunit protein uL18 from Crocosphaera subtropica (strain ATCC 51142 / BH68) (Cyanothece sp. (strain ATCC 51142)).